A 591-amino-acid chain; its full sequence is Fanconi anemia group C protein homolog (591 aa).

In terms of assembly, belongs to the multisubunit FA complex composed of FANCA, FANCB, FANCC, FANCE, FANCF, FANCG, FANCL/PHF9 and FANCM. This complex may also include HSP70. Interacts with ZBTB32. Upon IFNG induction, interacts with STAT1. Interacts with CDK1. Interacts with EIF2AK2. In terms of tissue distribution, ubiquitous.

Its subcellular location is the nucleus. The protein resides in the cytoplasm. Its function is as follows. DNA repair protein that may operate in a postreplication repair or a cell cycle checkpoint function. May be implicated in interstrand DNA cross-link repair and in the maintenance of normal chromosome stability. Upon IFNG induction, may facilitate STAT1 activation by recruiting STAT1 to IFNGR1. In Mus musculus (Mouse), this protein is Fanconi anemia group C protein homolog (Fancc).